The chain runs to 810 residues: MDNIISGQAQKVEDVDGTRVQNEFSKFLKSFKGDKNELQYKTAMKELVQPEKNTIFVDMQHLYKFSNNLATTIELQYYRVYPFMCEALHLATLDGCDENERQQMFKKQLYVSLYNLDAKTKVRELSADKVGGLVRIAGQIVRTHPVHPELSRACFVCEDCGVSTRDVQQQFRYTQPTKCANPQCMNRTRFSLDVNSSTFVDFQKIRIQETQAELPRGSIPRTVDVIVRGEMVETVQPGDKCDIVGTLIVIPDIAQLSTPGLRAETSNQNRGRATDKSEGITGLKALGVRDLTYKMAFLACHIQQTESLVGGDASGAMEENDYLELWTKMSPEDRSVLKQMSDDKKIEKNIVDSLFPNIYGNHEVKLGVLLMLLGGVAKKSKDEGTSLRGDINVCLVGDPSTAKSQVLKAVEEFSPRAIYTSGKASSAAGLTAAVVKDEESFEFVIEAGALMLADNGVCCIDEFDKMDVKDQVAIHEAMEQQTISITKAGVKATLNARASILAAANPVGGRYDRSRPLKYNVQMSAPIMSRFDLFFVLVDECNEVTDYAIARRILDNHRSISEHTERNTVYKIDDIKKYIAFARCFKPKISDKAAEALVREYKKLRMSDSNNAATSSWRITVRQLESLVRLSEALARLHCGKEVLEQHVEKAAELLNKSIVRVEQPDIALDEDDFDNNIVIVEANKENQGGDDDMEHDGEKDETAKVDPAKLKISFKEYKQLSDVLVLHMRADEESQGEEEYDGVKQSALVEWYLTTIEGEMETEEDFNVQKTVCERVIHRLVHQDHILLEVEPGEDPTLCVHPNYVVSDE.

One can recognise an MCM domain in the interval 346-553 (IEKNIVDSLF…VTDYAIARRI (208 aa)). ATP contacts are provided by serine 400, threonine 401, alanine 402, lysine 403, serine 404, and asparagine 505. Residues 529–532 (SRFD) carry the Arginine finger motif. Residues arginine 622 and glutamate 625 each contribute to the ADP site. The segment at 685-705 (KENQGGDDDMEHDGEKDETAK) is disordered.

The protein belongs to the MCM family. Component of the mcm2-7 complex. The complex forms a toroidal hexameric ring with the proposed subunit order mcm2-mcm6-mcm4-mcm7-mcm3-mcm5 (By simililarity).

It is found in the nucleus. It catalyses the reaction ATP + H2O = ADP + phosphate + H(+). Its function is as follows. Acts as a component of the MCM2-7 complex (MCM complex) which is the replicative helicase essential for 'once per cell cycle' DNA replication initiation and elongation in eukaryotic cells. Core component of CDC45-MCM-GINS (CMG) helicase, the molecular machine that unwinds template DNA during replication, and around which the replisome is built. The active ATPase sites in the MCM2-7 ring are formed through the interaction surfaces of two neighboring subunits such that a critical structure of a conserved arginine finger motif is provided in trans relative to the ATP-binding site of the Walker A box of the adjacent subunit. The six ATPase active sites, however, are likely to contribute differentially to the complex helicase activity. This is DNA replication licensing factor mcm-6 from Caenorhabditis briggsae.